Here is a 1174-residue protein sequence, read N- to C-terminus: Lysylphosphatidylglycerol biosynthesis bifunctional protein LysX (1174 aa).

Positions methionine 1–aspartate 665 are phosphatidylglycerol lysyltransferase. A disordered region spans residues valine 9–arginine 36. The segment covering valine 19 to aspartate 33 has biased composition (polar residues). The next 7 helical transmembrane spans lie at valine 82–valine 102, phenylalanine 124–alanine 144, isoleucine 148–isoleucine 168, phenylalanine 179–tyrosine 199, alanine 216–phenylalanine 236, alanine 274–serine 294, and valine 614–serine 634. A lysine--tRNA ligase region spans residues valine 666–histidine 1174. The OB DNA-binding region spans valine 728–isoleucine 806. The Mg(2+) site is built by aspartate 1086 and glutamate 1093.

It in the N-terminal section; belongs to the LPG synthetase family. The protein in the C-terminal section; belongs to the class-II aminoacyl-tRNA synthetase family. It depends on Mg(2+) as a cofactor.

The protein resides in the cell membrane. The catalysed reaction is tRNA(Lys) + L-lysine + ATP = L-lysyl-tRNA(Lys) + AMP + diphosphate. It catalyses the reaction L-lysyl-tRNA(Lys) + a 1,2-diacyl-sn-glycero-3-phospho-(1'-sn-glycerol) = a 1,2-diacyl-sn-glycero-3-phospho-1'-(3'-O-L-lysyl)-sn-glycerol + tRNA(Lys). Its function is as follows. Catalyzes the production of L-lysyl-tRNA(Lys)transfer and the transfer of a lysyl group from L-lysyl-tRNA(Lys) to membrane-bound phosphatidylglycerol (PG), which produces lysylphosphatidylglycerol (LPG), one of the components of the bacterial membrane with a positive net charge. LPG synthesis contributes to the resistance to cationic antimicrobial peptides (CAMPs) and likely protects M.tuberculosis against the CAMPs produced by competiting microorganisms (bacteriocins). In fact, the modification of anionic phosphatidylglycerol with positively charged L-lysine results in repulsion of the peptides. The sequence is that of Lysylphosphatidylglycerol biosynthesis bifunctional protein LysX (lysX) from Mycobacterium tuberculosis (strain KZN 1435 / MDR).